The primary structure comprises 85 residues: Large ribosomal subunit protein bL27 (85 aa).

Positions 1–20 are disordered; it reads MAHKKAGGSTRNGRDSESKR.

Belongs to the bacterial ribosomal protein bL27 family.

In Yersinia enterocolitica serotype O:8 / biotype 1B (strain NCTC 13174 / 8081), this protein is Large ribosomal subunit protein bL27.